The primary structure comprises 347 residues: MFKGFQKPKRLVANTETLTERYGMFTAQPFQRGFGTTIGNSLRRVLLSSIEGAAITAVRIEGVEHEFSPIPGVVEDATDIILNLKQIPFKISSDGIKTVRLSVDSHGDVRSGQIETDADVEVLDRDVHVATVSEGGKLNIEMRLKSGRGYVSADKNFDEDLALGYIPIDSVHSPVRKVNFAVEAARLGQMTDYDKLTLEVWTNGAVSPQDSIGYAAKLLKDHMTIFINFEEVPEQTEEISERGMDKMNEVLNRSVEELELSVRSYNCLKNANIQSIGELVQKTEAEMLRTKNFGRKSLNEIKEILANMGLSLGMRIDQHGRLVAPPPSAGGGPDFGPEDDGQDQIGE.

The tract at residues Met1–Glu230 is alpha N-terminal domain (alpha-NTD). The segment at Met247–Glu347 is alpha C-terminal domain (alpha-CTD). A disordered region spans residues Gly320–Glu347. Over residues Gly336–Glu347 the composition is skewed to acidic residues.

This sequence belongs to the RNA polymerase alpha chain family. As to quaternary structure, homodimer. The RNAP catalytic core consists of 2 alpha, 1 beta, 1 beta' and 1 omega subunit. When a sigma factor is associated with the core the holoenzyme is formed, which can initiate transcription.

It carries out the reaction RNA(n) + a ribonucleoside 5'-triphosphate = RNA(n+1) + diphosphate. In terms of biological role, DNA-dependent RNA polymerase catalyzes the transcription of DNA into RNA using the four ribonucleoside triphosphates as substrates. The polypeptide is DNA-directed RNA polymerase subunit alpha (Solibacter usitatus (strain Ellin6076)).